Here is a 278-residue protein sequence, read N- to C-terminus: Urease accessory protein UreD (278 aa).

Belongs to the UreD family. UreD, UreF and UreG form a complex that acts as a GTP-hydrolysis-dependent molecular chaperone, activating the urease apoprotein by helping to assemble the nickel containing metallocenter of UreC. The UreE protein probably delivers the nickel.

It localises to the cytoplasm. Required for maturation of urease via the functional incorporation of the urease nickel metallocenter. This chain is Urease accessory protein UreD, found in Escherichia coli.